Here is an 87-residue protein sequence, read N- to C-terminus: Putative regulatory protein GTNG_1019 (87 aa).

It belongs to the RemA family.

In Geobacillus thermodenitrificans (strain NG80-2), this protein is Putative regulatory protein GTNG_1019.